The primary structure comprises 150 residues: UPF0756 membrane protein Dd703_1075 (150 aa).

Transmembrane regions (helical) follow at residues 8-28 (LLIL…TITL), 51-71 (YGLS…IASG), 81-101 (AFLN…SWLG), and 114-134 (VVAG…GVPV).

It belongs to the UPF0756 family.

The protein localises to the cell membrane. The chain is UPF0756 membrane protein Dd703_1075 from Musicola paradisiaca (strain Ech703) (Dickeya paradisiaca).